The following is a 1939-amino-acid chain: Myosin-4 (1939 aa).

Residues 33–82 (DAKSSVFVVDAKESYVKATVQSREGGKVTAKTEGGATVTVKDDQVFSMNP) enclose the Myosin N-terminal SH3-like domain. Ser-36 bears the Phosphoserine mark. Thr-64 and Thr-69 each carry phosphothreonine. At Ser-79 the chain carries Phosphoserine. In terms of domain architecture, Myosin motor spans 86 to 782 (DKIEDMAMMT…LLGTLEEMRD (697 aa)). Residue Lys-130 is modified to N6,N6,N6-trimethyllysine. 179-186 (GESGAGKT) provides a ligand contact to ATP. Residue Tyr-389 is modified to Phosphotyrosine. Thr-391 is modified (phosphothreonine). Ser-392 carries the phosphoserine modification. The residue at position 419 (Thr-419) is a Phosphothreonine. The residue at position 424 (Tyr-424) is a Phosphotyrosine. Position 625 is a phosphoserine (Ser-625). An actin-binding region spans residues 659 to 681 (LNKLMTNLKSTHPHFVRCLIPNE). Residue His-757 is modified to Pros-methylhistidine. Positions 761–775 (KFGHTKVFFKAGLLG) are actin-binding. A Phosphothreonine modification is found at Thr-776. Residues 785–814 (LAQLITRTQAVCRGYLMRVEFKKMMERRES) form the IQ domain. Residues 843–1939 (LLKSAETEKE…EVHTKVISEE (1097 aa)) adopt a coiled-coil conformation. A phosphoserine mark is found at Ser-1092 and Ser-1096. Disordered stretches follow at residues 1128–1147 (AERA…SREL) and 1153–1172 (RLEE…KKRE). Ser-1162 and Ser-1237 each carry phosphoserine. Thr-1241 carries the post-translational modification Phosphothreonine. Phosphoserine is present on Ser-1243. Thr-1255 bears the Phosphothreonine mark. Residue Ser-1261 is modified to Phosphoserine. Position 1265 is a phosphothreonine (Thr-1265). Residues 1276–1299 (ELSTQKARLHTESGEFSRQLDEKD) form a disordered region. Position 1278 is a phosphoserine (Ser-1278). Positions 1284–1299 (LHTESGEFSRQLDEKD) are enriched in basic and acidic residues. Phosphothreonine is present on Thr-1286. Phosphoserine is present on residues Ser-1288, Ser-1292, Ser-1303, Ser-1306, and Ser-1413. Tyr-1464 carries the post-translational modification Phosphotyrosine. Thr-1467 carries the phosphothreonine modification. The residue at position 1474 (Ser-1474) is a Phosphoserine. Position 1492 is a phosphotyrosine (Tyr-1492). The residue at position 1495 (Ser-1495) is a Phosphoserine. Position 1501 is a phosphothreonine (Thr-1501). Phosphoserine is present on Ser-1514. A Phosphothreonine modification is found at Thr-1517. Phosphoserine occurs at positions 1542, 1547, 1554, 1574, 1600, 1603, 1714, and 1726. Residues Thr-1730 and Thr-1736 each carry the phosphothreonine modification. Ser-1739 is modified (phosphoserine).

Belongs to the TRAFAC class myosin-kinesin ATPase superfamily. Myosin family. In terms of assembly, muscle myosin is a hexameric protein that consists of 2 heavy chain subunits (MHC), 2 alkali light chain subunits (MLC) and 2 regulatory light chain subunits (MLC-2). In terms of tissue distribution, expressed in type 2b myofibers in the tibialis anterior muscle (at protein level).

The protein localises to the cytoplasm. Its subcellular location is the myofibril. In terms of biological role, muscle contraction. The protein is Myosin-4 (Myh4) of Mus musculus (Mouse).